The primary structure comprises 192 residues: 21.7 kDa class VI heat shock protein (192 aa).

Residues 80 to 192 form the sHSP domain; it reads SLRSLGQCRV…IPKINSKNKF (113 aa).

It belongs to the small heat shock protein (HSP20) family. As to quaternary structure, may form oligomeric structures.

The protein resides in the cytoplasm. The sequence is that of 21.7 kDa class VI heat shock protein (HSP21.7) from Arabidopsis thaliana (Mouse-ear cress).